A 418-amino-acid polypeptide reads, in one-letter code: Pyrophosphate--fructose 6-phosphate 1-phosphotransferase (418 aa).

Gly13 is a diphosphate binding site. Asn111 contacts Mg(2+). Residues 139–141 (TID), 187–189 (MGR), Glu244, and 295–298 (YLQR) contribute to the substrate site. Asp141 functions as the Proton acceptor in the catalytic mechanism.

The protein belongs to the phosphofructokinase type A (PFKA) family. PPi-dependent PFK group II subfamily. Clade 'B2' sub-subfamily. Homodimer. Mg(2+) serves as cofactor.

The protein resides in the cytoplasm. It catalyses the reaction beta-D-fructose 6-phosphate + diphosphate = beta-D-fructose 1,6-bisphosphate + phosphate + H(+). The protein operates within carbohydrate degradation; glycolysis; D-glyceraldehyde 3-phosphate and glycerone phosphate from D-glucose: step 3/4. With respect to regulation, non-allosteric. In terms of biological role, catalyzes the phosphorylation of D-fructose 6-phosphate, the first committing step of glycolysis. Uses inorganic phosphate (PPi) as phosphoryl donor instead of ATP like common ATP-dependent phosphofructokinases (ATP-PFKs), which renders the reaction reversible, and can thus function both in glycolysis and gluconeogenesis. Consistently, PPi-PFK can replace the enzymes of both the forward (ATP-PFK) and reverse (fructose-bisphosphatase (FBPase)) reactions. This Xanthomonas campestris pv. campestris (strain B100) protein is Pyrophosphate--fructose 6-phosphate 1-phosphotransferase.